A 624-amino-acid polypeptide reads, in one-letter code: Coagulation factor XI (624 aa).

The first 18 residues, 1–18 (MTSLHQVLYFIFFASVSS), serve as a signal peptide directing secretion. Apple domains follow at residues 20–103 (CVTK…FKQC), 110–193 (CSKD…LKSC), 200–283 (CIRD…LQHC), and 291–376 (CHPS…LRLC). 17 disulfides stabilise this stretch: Cys20-Cys103, Cys46-Cys76, Cys50-Cys56, Cys110-Cys193, Cys136-Cys165, Cys140-Cys146, Cys200-Cys283, Cys226-Cys255, Cys230-Cys236, Cys291-Cys376, Cys317-Cys348, Cys321-Cys327, Cys382-Cys499, Cys415-Cys431, Cys513-Cys580, Cys544-Cys559, and Cys570-Cys598. Residues Asn90 and Asn126 are each glycosylated (N-linked (GlcNAc...) asparagine). Asn297 carries an N-linked (GlcNAc...) asparagine glycan. Residues 390-622 (VVGGAASVHG…YVDWILEKTQ (233 aa)) enclose the Peptidase S1 domain. His430 acts as the Charge relay system in catalysis. Asn449 is a glycosylation site (N-linked (GlcNAc...) asparagine). Residue Asp479 is the Charge relay system of the active site. A glycan (N-linked (GlcNAc...) asparagine) is linked at Asn490. Heparin is bound at residue 547-550 (RYRR). The active-site Charge relay system is Ser574.

It belongs to the peptidase S1 family. Plasma kallikrein subfamily. Homodimer; disulfide-linked. After activation the heavy and light chains are also linked by a disulfide bond. Interacts (activated) with F9 (inactive and activated) in calcium-dependent manner. Forms a heterodimer with SERPINA5. In terms of processing, activated by factor XIIa (or XII), which cleaves each polypeptide after Arg-389 into the light chain, which contains the active site, and the heavy chain, which associates with high molecular weight (HMW) kininogen. Activated by F12 (activated); the presence of negatively charged surfaces accelerates activation. Activated by F2 (thrombin); the presence of negatively charged surfaces, such as polyphosphate and dextran sulfate, strongly accelerates activation. Autoactivated; the presence of negatively charged surfaces, such as polyphosphate and dextran sulfate, accelerates autoactivation and autolysis. N-glycosylated on both chains. N-glycosylated sites mainly consist of nonfucosylated sialylated biantennary (in high abundance) and/or triantennary (in low abundance) complex structures.

Its subcellular location is the secreted. It carries out the reaction Selective cleavage of Arg-|-Ala and Arg-|-Val bonds in factor IX to form factor IXa.. With respect to regulation, inhibited by SERPINA5. Its function is as follows. Factor XI triggers the middle phase of the intrinsic pathway of blood coagulation by activating factor IX. The protein is Coagulation factor XI (F11) of Mus musculus (Mouse).